The chain runs to 61 residues: Mu-diguetoxin-Dc1c (61 aa).

Cystine bridges form between Cys12–Cys25, Cys19–Cys39, and Cys24–Cys53.

It belongs to the neurotoxin 26 (DTX) family. Expressed by the venom gland.

Its subcellular location is the secreted. Functionally, acts by delaying the inactivation of presynaptic voltage-sensitive sodium channels (Nav). Acts against insects and causes a progressive spastic paralysis. This is Mu-diguetoxin-Dc1c from Diguetia canities (Desert bush spider).